The sequence spans 271 residues: Formamidopyrimidine-DNA glycosylase (271 aa).

Catalysis depends on P2, which acts as the Schiff-base intermediate with DNA. Catalysis depends on E3, which acts as the Proton donor. K57 acts as the Proton donor; for beta-elimination activity in catalysis. Residues H90, R109, and K151 each contribute to the DNA site. The FPG-type zinc-finger motif lies at 236-270 (HVYGRGGETCTSCGNLLSEIRLGQRTTVFCGICQT). R260 (proton donor; for delta-elimination activity) is an active-site residue.

The protein belongs to the FPG family. Monomer. It depends on Zn(2+) as a cofactor.

The catalysed reaction is Hydrolysis of DNA containing ring-opened 7-methylguanine residues, releasing 2,6-diamino-4-hydroxy-5-(N-methyl)formamidopyrimidine.. It carries out the reaction 2'-deoxyribonucleotide-(2'-deoxyribose 5'-phosphate)-2'-deoxyribonucleotide-DNA = a 3'-end 2'-deoxyribonucleotide-(2,3-dehydro-2,3-deoxyribose 5'-phosphate)-DNA + a 5'-end 5'-phospho-2'-deoxyribonucleoside-DNA + H(+). Its function is as follows. Involved in base excision repair of DNA damaged by oxidation or by mutagenic agents. Acts as a DNA glycosylase that recognizes and removes damaged bases. Has a preference for oxidized purines, such as 7,8-dihydro-8-oxoguanine (8-oxoG). Has AP (apurinic/apyrimidinic) lyase activity and introduces nicks in the DNA strand. Cleaves the DNA backbone by beta-delta elimination to generate a single-strand break at the site of the removed base with both 3'- and 5'-phosphates. This chain is Formamidopyrimidine-DNA glycosylase, found in Shewanella baltica (strain OS155 / ATCC BAA-1091).